The primary structure comprises 260 residues: Thiazole synthase (260 aa).

Lys101 acts as the Schiff-base intermediate with DXP in catalysis. 1-deoxy-D-xylulose 5-phosphate is bound by residues Gly162, 188 to 189 (AG), and 210 to 211 (NT).

The protein belongs to the ThiG family. As to quaternary structure, homotetramer. Forms heterodimers with either ThiH or ThiS.

It is found in the cytoplasm. The enzyme catalyses [ThiS sulfur-carrier protein]-C-terminal-Gly-aminoethanethioate + 2-iminoacetate + 1-deoxy-D-xylulose 5-phosphate = [ThiS sulfur-carrier protein]-C-terminal Gly-Gly + 2-[(2R,5Z)-2-carboxy-4-methylthiazol-5(2H)-ylidene]ethyl phosphate + 2 H2O + H(+). It functions in the pathway cofactor biosynthesis; thiamine diphosphate biosynthesis. Catalyzes the rearrangement of 1-deoxy-D-xylulose 5-phosphate (DXP) to produce the thiazole phosphate moiety of thiamine. Sulfur is provided by the thiocarboxylate moiety of the carrier protein ThiS. In vitro, sulfur can be provided by H(2)S. This Acidithiobacillus ferrooxidans (strain ATCC 23270 / DSM 14882 / CIP 104768 / NCIMB 8455) (Ferrobacillus ferrooxidans (strain ATCC 23270)) protein is Thiazole synthase.